The primary structure comprises 188 residues: FMN-dependent NADPH-azoreductase (188 aa).

Belongs to the azoreductase type 2 family. In terms of assembly, homotetramer. FMN is required as a cofactor.

In terms of biological role, catalyzes the reductive cleavage of azo bond in aromatic azo compounds to the corresponding amines. Requires NADPH, but not NADH, as an electron donor for its activity. The protein is FMN-dependent NADPH-azoreductase (azo1) of Staphylococcus saprophyticus subsp. saprophyticus (strain ATCC 15305 / DSM 20229 / NCIMB 8711 / NCTC 7292 / S-41).